Consider the following 156-residue polypeptide: Transcriptional repressor NrdR (156 aa).

Residues 3-34 (CPFCGNVDTQVKDSRPAEDHVAIRRRRFCPAC) fold into a zinc finger. Positions 49–139 (LVVIKSNGKR…VYKNFQATGD (91 aa)) constitute an ATP-cone domain.

Belongs to the NrdR family. Zn(2+) serves as cofactor.

In terms of biological role, negatively regulates transcription of bacterial ribonucleotide reductase nrd genes and operons by binding to NrdR-boxes. The sequence is that of Transcriptional repressor NrdR from Jannaschia sp. (strain CCS1).